The following is a 233-amino-acid chain: Glycerol-3-phosphate acyltransferase (233 aa).

5 helical membrane passes run 7-27 (WIII…GYII), 94-114 (ISIV…YIGF), 127-147 (VIAI…IVAF), 153-173 (SIGS…GVLI), and 185-205 (ISYE…LLII).

It belongs to the PlsY family. In terms of assembly, probably interacts with PlsX.

Its subcellular location is the cell membrane. It carries out the reaction an acyl phosphate + sn-glycerol 3-phosphate = a 1-acyl-sn-glycero-3-phosphate + phosphate. It participates in lipid metabolism; phospholipid metabolism. Its function is as follows. Catalyzes the transfer of an acyl group from acyl-phosphate (acyl-PO(4)) to glycerol-3-phosphate (G3P) to form lysophosphatidic acid (LPA). This enzyme utilizes acyl-phosphate as fatty acyl donor, but not acyl-CoA or acyl-ACP. This chain is Glycerol-3-phosphate acyltransferase, found in Acholeplasma laidlawii.